The primary structure comprises 331 residues: Pectinesterase (331 aa).

Residues M1–A17 form the signal peptide. Position 138 (Q138) interacts with substrate. D161 acts as the Proton donor in catalysis. D182 (nucleophile) is an active-site residue. The substrate site is built by R247 and W249.

This sequence belongs to the pectinesterase family.

The protein resides in the secreted. It catalyses the reaction [(1-&gt;4)-alpha-D-galacturonosyl methyl ester](n) + n H2O = [(1-&gt;4)-alpha-D-galacturonosyl](n) + n methanol + n H(+). Its pathway is glycan metabolism; pectin degradation; 2-dehydro-3-deoxy-D-gluconate from pectin: step 1/5. In terms of biological role, involved in maceration and soft-rotting of plant tissue. The protein is Pectinesterase (pme1) of Aspergillus niger.